The primary structure comprises 3619 residues: MFRRFKDLIGTSEDPTPQVPHSPGHPPHQPPQQQQQQQQQQQQQQQQQQQQQQQQQQPQPQQPLSPRSVSSPIGSTTSSNSTSSFSSPVRKYSSATEESSSINSNNNNNNNKNNNNNNNSNIIESNINVWTIMIGSEVEVIRSQATAQKLKLLWQEFLSSKSDKDKVMRLNKLLPYFIGLYEDKKIDTKSPMVDIFGNNSKSFSFAISRRLVKDINEIMKQANSPQQPPQPPQLIKETIAKEIYKFFSTTSGQVSGFELLYSIEILSESNTSCAEAMAEASIPSMLVRCLQYFFLVPYTTMMETTKGIIEEKLIRTLCFLSKQKSAIEELQKTDTLSTLFALMSNECPPSHRPLRAKIGSFGLELTDLYPPTITYINSKRVIANIIKDLTNYYMFTPESYVTLCRIIIKILSESSKKSTILLDEFQRNDGYTFLVDSLFRLESSKDKPALFEQLLDSICSLVYIGYGNVSLPVENSSVPYQTSINNIKEISNQNYISKNGNAFKVLERYFLKSNYEENRVKILDRILSVYSSNTVNFILLQHTSTLTKFIQEYESLSNGLKYHVMKIVCFVVTVLNCVPFQELSTFSLLVGENPSFYTLEMINQLITTLVNFEFRYKHIFRETGLLDILVKVIDVIAQDIIRLNNSKKIDDDDENNNNNNNNNNNNNNNNNNNNDNDNNNNNDNNNEENGSGSNGPIVPCMTGNGEKEADSNDQALNSIIKVESFQILLDSLFILISENPDNISLIRSFSIFNILLRFLPYSSVRGKSLRILQQLIKYDPEPTQKEFDGLIKVLTSVNKENYPMKSDILNATRKLFNISKHARDSFREHGGFVSIISVFISLESSFSPNRKDSRNWDMEKLELIESICRCTTSALCGNVINRENFEQQIGYKTFSSCLIMTGVLGTEFSKSVVDFIFDMVTENLNASDQISNQMIINNVESFNVILDIIPHIENKDFRLQIISRINKMAEYGRYNQEALSKLSIPDWILSRFPSNLSNANDPLQPLLLSLIQTVGANCLSGSELRQFVKLLQPEHSPEVLLKILSSMAKSPPTPPYFEFNLSKIPFGYIRVPITERAWPPTNGYTIMFWLYIDKFPTVNNNNNNNNSSNNSNNSNNSNNNNNNNNNNDQIDLVHIYSDDKKSSLYIYLKNGIITVNIINSSKYVIEIPSYKFVEGKWYHIGIVHARRLLGGTDFKLFVDGFLKYTATKAQYPAQITSGSMLICDIGVSNQNRFPTDSIWRIGTFYLLEDSLGAKHINTIYFLGPNYASNFKGRFSPYQTYEIVNSANLMAIKDLDYGDQLGPLNLAKVSMQIDENKILVGLCASNKLIRTNNSSKVVYNEIFNGIINELSQNHGVALNVFSSPNGTSPNLTGLQNNNNNNNNSGGSNSKKDLEGRVEIINQADLTTKLRGVLIGSVEAFRRNKVADSIKKIGGMPISLLLLEKANSEETLFDSLGLLVGLIQYHPTNTHEMSQINGYELLAWVLKKKASLGLFNSNILELLFDLIGINGNCSTTITSRAPQEGTVANWNACKYIMMNWDIWRLTTPALQRHVINGYNSLIVNNIQRRFNIDSLRKVNVIQEIFDILSSSTNEEPLPESVASSVINVLYNILSYGGLIEDDIRQISAFLISHLHKDIPTPSSSSSSSSTSSTSSRRKSIHRSKLATMELSNTATIQLVNHVFYTFLKVVSNCQTQETAAIFRRVSSYWCFFFIDENLPPLTVSLALRVTCIFFLYKYDYCSTFIKKSGFKLLEKVLPSLSGHQEIYLCLLHLLLGGDPKLLVDLDLSSSSGGAGGTTIVFHELLRIFTPFEKSLYCIEAAQLILSLIKRSYEDNYQYLEQKQQELQNANQGLDNDELLSSLISNVNINNSINNNDNSNSPLSTFQTISRSVSSSSISSNISSSSSSSTLVNSSNSNNNNNTPTSGLASTITKFGNLWNKFEEKTLEFAVTTGAIDENSTGATDAQQAALKKKNRMSIQSSPFQSKNLGTGGDDSVTNTPNGSSLHNRVTGMDDDSKLNGALGGGGGGGGGGVSVGDNQPINFNLYDEMLPELKISQFATPEESSNLQYTMLTYFIYLFHENQYFQQECYSQPMVEELISILFPNGKINLPPLYNSTGQTNGIKDRVLDLVVKFLCQIMLSAMRKTSKAISIIEMVLEGAPTTATDEEFILYHSRILLDLMYVVETNITKTEFFDNERVHSNLIKLSSMLVDRVNLDQLVKNNKIIIAKRIFLFIVKILEKLEADRVGLQKTVQSLYKSLNRIILYLINHTTDTDLSFVANHIINHQRIIFSENNLDSDFMNAFCYPLYKLVISDQHEHVDNSIKLWRLLLSLKTSSYIESLATVLQLKVSSGSNQRQSEIIDLKPGFELLRNTSGNGAFNNDEFKLWINDNIQTITQVFEENPKKQHLSFKNNEKKHSSEHTLPSLKSRRTERLSKKQRQDRKDQSHQEEKSKHITKKAQYFVRSESDRRKKIKQLESDKQKFNAIQWENMRAQITRERAVWGPSEPHPLDKWKLDSTEGPYRMRKKMEKNYNFYKNYPYVPPSFDEQNNSLLPIPCSADSETYMNIVGTEEANLLESSYWKFDLLSTNQVITSSTNTSSITNNNNNNNNNNNNNNNNNNNTITKSTSQNANNNNNANNMNQSTSSSSSNTTTTTTPQQSSSQIKVSSPELSSNEITPPTSPVQSSSEDVFKSPKLQSSTVEGQLSRNPSSSELFNDNSSTISEENSSLTSASTTLSPPPPSTQTTTTTTTSTPTTQSSVATTTTGNTNEVDEETSTNNQTTSEDETQAFIRLLDPYDQSYLKDAMRKDPRLNGIMYNCGSVDGMDKIEGILIFCPVYMYIFDGYYKDENTGDISEVEEKINSEWLPEGTVLPMKKKIIHYFLKWAYEDIRDVLKRRYLLRQVALEIFSTDGRNNLVVYRDEPTRDEVYHTLVNNVSSHNTIGGDAQGITGGQTGNDDNDDHHGGGGGRGVRDRFTSIWRKSPLTLKWQQGQISNFQYLMHLNTLAGRSYNDLTQYPVFPWVLSDYESEELDIDDPKVYRDLSKPMGALEESRAQKFRERFENWDDQEPNEHGHKVPKFHYGTHYSSAAIVLYYLIRLEPFTQHFLKLQGGRWDQPDRLFSSITEAWASSSQGSTGVVMELIPEFYYLDEFLVNNNKFNFGTKQGGEPIDDIILPPWAKGSPQEFIKLHRKALESDYVSEHLHEWIDLIFGYRQQGKAADDSLNVFYYLTYEGAVNIDAISDPVEKAATIAQINNFGQTPKQLFDKPHPKRNATLMGLPFYAKALTGNFIKDIGEPVGQIRLINDRATCVGFNKVLLPPNHSKYMLWGLPDGSIRYNTGDKIKVLEDHHDGPLTCLTATEDGRICVSGGSDSLICVYNLKRFSLAKRLSGHTGSITCVSASRPYSIIVSGSDDRTCIIWDLNRLCYVRSLDAHEGPISCIGIHDTTGEIVVCSGTTISVYTVNGELLINYKTSQIANDQITCCIWSKGPEWLGENVLLTGHRDGKVKVWGLETRLLPDNNNSNNNNNNNNNNNNNATQIPSTNNNKLKFKNVIILRATFSNSQSHSTAITSIFLTNDQQKFYTGDITGRVCMWSDNEASQVKQRGWINTDIRGILQSEKK.

Disordered stretches follow at residues M1 to N117, K648 to A709, N1101 to Q1129, S1367 to K1390, I1636 to I1658, S1893 to G1924, and Q1964 to N1999. The segment covering P17–P30 has biased composition (pro residues). 8 stretches are compositionally biased toward low complexity: residues P31–Q59, S68–S87, E97–N117, N656–N689, N1101–N1127, N1375–N1387, S1640–S1652, and S1893–S1923. One copy of the WD 1 repeat lies at S94–M133. The segment covering M1974–L1986 has biased composition (polar residues). Residues V2234–L2258 are a coiled coil. The stretch at L2294–S2335 is one WD 2 repeat. Disordered regions lie at residues K2403–K2457 and N2596–E2785. A compositionally biased stretch (basic and acidic residues) spans D2440 to K2452. The segment covering N2596–Q2662 has biased composition (low complexity). Polar residues-rich tracts occupy residues I2663–E2687 and K2694–N2725. Composition is skewed to low complexity over residues S2726–L2735 and T2742–T2764. The region spanning K2807–V2932 is the BEACH-type PH domain. Residues T2940–R2971 are disordered. Residues D2944 to T2953 show a composition bias toward gly residues. Residues D2959–R2971 are compositionally biased toward basic and acidic residues. The BEACH domain occupies D2972–R3270. 5 WD repeats span residues H3347–R3386, G3389–S3428, A3431–T3471, I3474–N3518, and S3563–Q3602. A disordered region spans residues P3516–P3539. Low complexity predominate over residues N3518–N3534.

The protein localises to the contractile vacuole membrane. Functionally, involved in myosin-independent cytokinesis and early steps of phagocytosis. Also involved in contractile vacuole-mediated osmoregulation. In Dictyostelium discoideum (Social amoeba), this protein is BEACH domain-containing protein lvsA (lvsA).